Reading from the N-terminus, the 373-residue chain is Glutamate 5-kinase (373 aa).

Position 16 (Lys-16) interacts with ATP. Substrate is bound by residues Ser-56, Asp-143, and Asn-155. Residue Thr-175–Asp-176 coordinates ATP. Positions Arg-281–Lys-359 constitute a PUA domain.

It belongs to the glutamate 5-kinase family.

The protein resides in the cytoplasm. It catalyses the reaction L-glutamate + ATP = L-glutamyl 5-phosphate + ADP. The protein operates within amino-acid biosynthesis; L-proline biosynthesis; L-glutamate 5-semialdehyde from L-glutamate: step 1/2. In terms of biological role, catalyzes the transfer of a phosphate group to glutamate to form L-glutamate 5-phosphate. The sequence is that of Glutamate 5-kinase from Teredinibacter turnerae (strain ATCC 39867 / T7901).